A 424-amino-acid polypeptide reads, in one-letter code: WD-40 repeat-containing protein MSI3 (424 aa).

The residue at position 1 (Met-1) is an N-acetylmethionine. WD repeat units lie at residues Gly-167–Val-207, Gly-216–Gln-256, Val-259–His-299, Lys-303–Leu-343, and Gly-362–Asp-402. Residues Ile-233–Arg-249 carry the DWD box motif. Positions Met-394 to Lys-424 are disordered. A compositionally biased stretch (acidic residues) spans Glu-401–Gly-412. The segment covering Asn-413–Lys-424 has biased composition (polar residues).

The protein belongs to the WD repeat RBAP46/RBAP48/MSI1 family.

It is found in the nucleus. Functionally, core histone-binding subunit that may target chromatin assembly factors, chromatin remodeling factors and histone deacetylases to their histone substrates in a manner that is regulated by nucleosomal DNA. This Arabidopsis thaliana (Mouse-ear cress) protein is WD-40 repeat-containing protein MSI3 (MSI3).